We begin with the raw amino-acid sequence, 269 residues long: Protein LNK3 (269 aa).

Interacts with REV8.

Probable transcriptional coactivator. The chain is Protein LNK3 from Arabidopsis thaliana (Mouse-ear cress).